A 505-amino-acid chain; its full sequence is Megakaryocyte-associated tyrosine-protein kinase (505 aa).

Residues A46 to A108 form the SH3 domain. The region spanning W120 to R209 is the SH2 domain. The region spanning L233–R481 is the Protein kinase domain. Residues I239 to V247 and K260 contribute to the ATP site. Catalysis depends on D350, which acts as the Proton acceptor. The interval V483–P505 is disordered.

It belongs to the protein kinase superfamily. Tyr protein kinase family. CSK subfamily. Interacts with KIT. As to expression, most abundant in brain, and to a lesser extent in the spleen, the thymus and the liver. Also found in the T-cell lineage.

Its subcellular location is the cytoplasm. The protein resides in the membrane. The enzyme catalyses L-tyrosyl-[protein] + ATP = O-phospho-L-tyrosyl-[protein] + ADP + H(+). Functionally, could play a significant role in the signal transduction of hematopoietic cells. May regulate tyrosine kinase activity of SRC-family members in brain by specifically phosphorylating their C-terminal regulatory tyrosine residue which acts as a negative regulatory site. It may play an inhibitory role in the control of T-cell proliferation. The chain is Megakaryocyte-associated tyrosine-protein kinase (Matk) from Mus musculus (Mouse).